The primary structure comprises 4134 residues: MAGGVQECLQELHGCLQPGDAMRGYGLLRGLGEACLTCLAGGALALHVSLVFAPERGLLAFVCRSLGVEEFRECREEALKFLCVFLERIGERAHPYACSLKQTCISVYTKERAAKCKIPALELLIKLLQSLRRSCLMEEMKVGEIFNKFYGELAVRSKISDTVLEKIYELLGVLGEVHPADMINNSEKLFRAYLGELKTQMTSATRVPKLPIVAGCLRGLTALMYNFTKSVDEDAQTSKEIFDFAVKAIRPQVDQKRYAVHLAGLQLFSWHAAQFGTLLLDSYVMLFETMCRWCGHTNQELKKAGHNALDSFLKQMSLMVAKDAELHKSKLKFFMEQFYGIIRRMDSSNKELSIAIRGYGLFAAPCKAMHPADVDAMYIELLQRCKQMYLTEAETIDDHLYQLPSFLQSIASVIFHLDTIPEVYTPVLEHLVVLQINSFPRYSEKMQLVCCRSIIKVFLALSIKGPVLWNFISTVVHQGLIRVFSKPMKFSKDVFGKETSGSEEFPESGEVDTARWKVPTYKDYLYLFRSLLSCDTMKESIFEEENFLTGNSPLQSLNRLLYDELIKSILKIIEKLDLTVQKLNVHEQDENETDSAFIGPTSDPASNLQPKKPTDFIAFINLVEFCRDILPDKHVEYFQPWVYSFGYELIIHSTRLPLISGFYKLLSVTMKIAKKIKYFEGVGPKSLRKATEDPEKSSCFALFAKFGKEVTAKMKQYKDELLASCLNFLLSLPHDIVMLDIKAYIPALQNAFKLGLSCTPMADLGLDALEDWSAHIPRHIMQPYYKDVLPLLDGYLKNSATTVEPQNNWEVRKLSRAAQKGFNKIVIQRLRKAKTSSLDDNPSLEAVRTRVARLLGSLGGQINHNLITATSAEEMMKKCVSWDTKNHLSFAVPFADMKPVIYLDVFLPRVTDLALSASDRQTKIAACELLHSIVAYMLGKASQMPERQQGPPPMHQLYKRIFPVLLRLACDVDQVTRQLYEPLVMQLIHWFTNNKKFESQDTVTFLEAILSGIVDPVDSTLRDFCGQCVREFLKWSIKQTTPKQQEKSPANTKSLFKRLYSLALHPSAFKRLGAALAFNSIYREFREENSLVEQFVFEALVVFLESLALTHTDEKSLGTTQQCCDAINHLKRIIKHKAPALNKEGKRRVPRGFPATKSVCLQDVVMWLLVQCGRPQTECRHKAMELFYEFVPLLPGNNSPSSWLADVLKKRDVSFLINKFEGGGSDAKSPSGILSQPTLRDMQEPFSLLTVMRWMDMFLAALDCYNTFFELRMIKPHEILGVNERSSFLEAVDFFLETIALHDIHAAEQCFDCRSRGNIFSPQEREVYNYSKCTIIVRIMEFVTMILEICQQDFWKLLEKELLNANFIELLVMTVCDPSHIGFNTADVQVMKNLPDISVRLLKALMKSPYKEYLQLCLKKRITPQSFEDLCSVDLFNSDARFDQVRFSAVLSACKQLQKSGLLHSVLHSQDERPHPSIGSKLLSVVYKSIAPGSERSSLPAVDISSKRLADRLLQLAFAIDDQCEELVSLLLNTVVLSVPLSKASERNFVDFSHGQYFYSLFSDTINQQLLKNLDVIVIHLMESSVSNPQMVGSILNGMLDQSFRERTIRKQQGVKLVTAVLRNWKRLDSWWAKDSSPESKMAVLTLLAKVLQIDSSVSFNTSHEAFTAVFDTYTSLLTDQNLGLNLKGHAVIILPFFTNLSGEKLHDLKNALDQLVAFNFPMSSDEFPKGTLKHNNYVDCTKKFLDALELSQSPMLLQLMTEVLCRDHRHSMEDLFQASFKRISRRSSTDKQVVLLDTVHKMFQNEDLLSNIVRQAFVDRSLLTLMSHCSLDALREFFCKIIVQAMDTLNSRFTKSNECVFDTQITKKMGYYKMLEVMYIRLSKDDVHSKDSKINQAYRGSVSVEGNELTKALIKLCYDAFTENMAGENQLLEKRRQYHCAAYNCAIAVISCVFTESKFYQGFLFTEKSEKNLLIFENLIDLKRQYVFPVEIEVPLERKKRYIAIRKEAREAWNDGQDEPKYLASASYMMDSSLSEEMSQFDFSTGVQGFSYSSQDVTASSAHFRRKETSEYMVLNDEMELEMDELNQHECMAPLTTLIKHMQRNQITPKVEEGVIPVDLPLWMKFLHSKLGNPSVPLNIRLFIAKLIVNTEDVFRPYAKQWLGPMLQLVVSGDNGGEGIHYMVVEIAVTVLSWTSVTTPKGNIKDEILANRLLEFLMKNAFHQKRAVFRHNLEIIKTVIECWKNCLSIPYSLIFEKFSSGDPDTKDNSVGIQLLGIVLANNLPPFDLKCEIDRVRYFQALVSNMGLLRYKEVYAAAAEVLGLALQYIAERQNILEDPVYDCVIKQLKRHQNTQQDKFIICLNKVVKNFPPLADRFMNAVFFLIPKLHGVMKNYCLEVIMCRAEEIPDLYLQLKSKDFIQIMKHRDDERQRVCLDIIYKMLSTLKPPELKELLPGVTGFISHPSVICRQRMYDILMWIYDNYSDPESQADGDSQEVLSLAKEILLQGLIDENAELQLIVRNFWSDETRLPANILDRMLMLLNSLYSAKIETQYLSLITNFLLEMTSKSPDYSRKIFEHPLSECKFHDFVIDSSWRYRSTMLTPMFVETQASQSTNRNSSQERSLSISGSVGGRVRATQRQYEFTPTQNVSGRSSFNWLTGNSIDTLAEYTVPSSSESLSSSMLLVNKRSEKFKQAAFKPVGPDFGKKRLSLPGDKVDSKTKGIDERAEILRLRRRFLKDQEKVSLIYARKGVAEQKREKEMKSELKMKFDGQVTLYRSYRVGDLPDIQIEHCSLIAPLQGLAQKDPTFAKQLFSSLFGGIFCEVKKSKIPSEKKAIIQKLLKDFNHFLSTSVSYFPPFIACIQEISYKHRELLELDSANVSTSCLASLQQPVGILLLEHALMALSPAEEPPSKRMRGRTELPPDVVKWLELAKLYRSLGDYDVLRGIFSGKIGTKDITQQALLAEARSDYAEAAKCYDEALSKEDWEDGEPTEAEKDFWELASLECYDHLTEWKSLEYCATVNIDSGKPPDLNKTWSDPFYQETYLPYIIRSKLKLLLNGENDQTLLTFIDEAMKTEQKKALIEMHYSQELSLLYILQDDFDRAKYYIGNGIQIFMQSYSSIDTLLYQSRMSKLQSVQALTEIQDFINFMTKTSNIASQAKSLKRLLRTWTSRYPDAKMDPMNIWDDIITNRCFFLDKLQEKFLCDKANDSMEVDEESSVGDQMEVDQQDEDIHSMIRSCKFNMKLKMIESARKQNSFSIAKKLLKGLRREAKTREDWLVRWNYAYCRFVHSCSQSQSCPERVLSVLKTISLLEDTKSDYLNKNIMAFRNQNLLLGTTYHIMANALSQDPKCCEQIEEEKTGKILELSGESSESPEKILAGLNKRAFQCFSSAARKSEEEVQSLSMEHVDVKGVIDAYMTLVGFCDQHLRKEEEGSLEINAADLQLFPAIVVEKMIKALKLNSREARLRFPRLLQIIERYPAETLGLVTRELPSVPCWQFIGWISQMMALLDKDEAVAVQHTVEEIVDTYPQAIIYPFTISSESYCFKDTAAGCRNKEFVASIKNKLDRGGVVQDFIHALEQLSNPVMLFKDWVADVRNELVKTQRNKIILKEMYEGMYKNLGDVKAPGLGWLRKRFVQAFGKDFDSHFGKGGSKLLDMKISDFNEITTALLTKMNKTHKEPGNLKECSPWMSEFRAEFLRNELEVPGQYDGKGKPLPEYHVKISGFDERIMVLESLRKPKRITIRGSDEQEHPFLVKGGEDLRQDQRIEQLFDVMNIVLSRDAACSQRNMQLKTYQVIPMTTRLGLIKWLENTCTLKEFLRNSMTEEEDANYNSLKGPRAAYSDWLSKMGGKAQGLSRYNAMYKNASRTETVIAFKSRESSVPEDLLRRAFVKMSTSPEAFLALRSHFVSSHALMCVSHWILGIGDRHLSNFMINKETGGMVGIDFGHAFGSATQFLPVPELMPFRLTRQFVNLMMPVKEWGLIYSVMVHALRAYRADPDLLISTMDVFVKEPSLDWKNFEQRQLKKGGTWIKEINTAEVNWYPLQKVSYVKRKLTGANPARITCDELRLGYEKLPFYNDFAAVARGSADHNIRAKEPEDRLSEETQVRCLIDQATDPNLLGRVWEGWEPWM.

HEAT repeat units lie at residues 900–937, 1000–1036, and 1050–1085; these read VIYL…VAYM, QDTV…LKWS, and ANTK…YREF. 2 TPR repeats span residues 1265–1305 and 1722–1755; these read YNTF…HDIH and PMSS…SQSP. Ser2055 carries the phosphoserine; by autocatalysis modification. A TPR 3 repeat occupies 2207–2240; it reads DEILANRLLEFLMKNAFHQKRAVFRHNLEIIKTV. Position 2609 is a phosphothreonine; by autocatalysis (Thr2609). The segment covering 2611–2629 has biased composition (polar residues); the sequence is ASQSTNRNSSQERSLSISG. Positions 2611–2631 are disordered; it reads ASQSTNRNSSQERSLSISGSV. Ser2612 is subject to Phosphoserine; by autocatalysis. Residues Thr2638 and Thr2647 each carry the phosphothreonine; by autocatalysis modification. The FAT domain maps to 2880–3545; that stretch reads NVSTSCLASL…IYPFTISSES (666 aa). Positions 3728–4059 constitute a PI3K/PI4K catalytic domain; sequence FDERIMVLES…VSYVKRKLTG (332 aa). The tract at residues 3734 to 3740 is G-loop; that stretch reads VLESLRK. The segment at 3925-3933 is catalytic loop; that stretch reads GIGDRHLSN. An activation loop region spans residues 3945-3970; the sequence is GIDFGHAFGSATQFLPVPELMPFRLT. In terms of domain architecture, FATC spans 4102 to 4134; it reads DRLSEETQVRCLIDQATDPNLLGRVWEGWEPWM.

The protein belongs to the PI3/PI4-kinase family. As to quaternary structure, DNA-PK is a heterotrimer of PRKDC and the Ku dimer (composed of XRCC6/Ku70 and XRCC5/Ku86). Component of the core long-range non-homologous end joining (NHEJ) complex (also named DNA-PK complex) composed of PRKDC, LIG4, XRCC4, XRCC6/Ku70, XRCC5/Ku86 and NHEJ1/XLF. Additional component of the NHEJ complex includes PAXX. Following autophosphorylation, PRKDC dissociates from DNA. Autophosphorylated at two clusters, the T2609 cluster and the S2056 cluster. Autophosphorylated on Ser-2055, Thr-2609, Thr-2638 and Thr-2647. Ser-2055 and Thr-2609 are DNA damage-inducible phosphorylation sites (inducible with ionizing radiation, IR) dephosphorylated by PPP5C. Autophosphorylation induces a conformational change that leads to remodeling of the DNA-PK complex, requisite for efficient end processing and DNA repair. Autophosphorylation in trans within DNA-PK complexes loaded on DNA ends leads to the dissociation of PRKDC from DNA and the transition into the short-range NHEJ complex. Autophosphorylation of the T2609 cluster is required for hematopoietic development and protein synthesis in erythrocytes precursors.

The protein localises to the nucleus. It is found in the nucleolus. The enzyme catalyses L-seryl-[protein] + ATP = O-phospho-L-seryl-[protein] + ADP + H(+). It catalyses the reaction L-threonyl-[protein] + ATP = O-phospho-L-threonyl-[protein] + ADP + H(+). Functionally, serine/threonine-protein kinase that acts as a molecular sensor for DNA damage. Involved in DNA nonhomologous end joining (NHEJ) required for double-strand break (DSB) repair and V(D)J recombination. Must be bound to DNA to express its catalytic properties. Promotes processing of hairpin DNA structures in V(D)J recombination by activation of the hairpin endonuclease artemis (DCLRE1C). Recruited by XRCC5 and XRCC6 to DNA ends and is required to (1) protect and align broken ends of DNA, thereby preventing their degradation, (2) and sequester the DSB for repair by NHEJ. Acts as a scaffold protein to aid the localization of DNA repair proteins to the site of damage. The assembly of the DNA-PK complex at DNA ends is also required for the NHEJ ligation step. Found at the ends of chromosomes, suggesting a further role in the maintenance of telomeric stability and the prevention of chromosomal end fusion. As part of the DNA-PK complex, involved in the early steps of ribosome assembly by promoting the processing of precursor rRNA into mature 18S rRNA in the small-subunit processome. Recognizes the substrate consensus sequence [ST]-Q. Phosphorylates 'Ser-139' of histone variant H2AX, thereby regulating DNA damage response mechanism. The protein is DNA-dependent protein kinase catalytic subunit (PRKDC) of Gallus gallus (Chicken).